The primary structure comprises 259 residues: Phosphate import ATP-binding protein PstB (259 aa).

The ABC transporter domain maps to 2 to 248; it reads GQRIDVNHEN…ITMFNNPQNE (247 aa). 37–44 lines the ATP pocket; that stretch reads GPSGCGKS.

It belongs to the ABC transporter superfamily. Phosphate importer (TC 3.A.1.7) family. In terms of assembly, the complex is composed of two ATP-binding proteins (PstB), two transmembrane proteins (PstC and PstA) and a solute-binding protein (PstS).

It localises to the cell membrane. The enzyme catalyses phosphate(out) + ATP + H2O = ADP + 2 phosphate(in) + H(+). Part of the ABC transporter complex PstSACB involved in phosphate import. Responsible for energy coupling to the transport system. This is Phosphate import ATP-binding protein PstB from Bifidobacterium longum (strain NCC 2705).